The chain runs to 525 residues: GMP synthase [glutamine-hydrolyzing] (525 aa).

The region spanning 9-207 (RILILDFGSQ…VLDICGCAAL (199 aa)) is the Glutamine amidotransferase type-1 domain. Cys86 functions as the Nucleophile in the catalytic mechanism. Active-site residues include His181 and Glu183. Positions 208 to 400 (WTPSNIVDDA…LGLPYDMVYR (193 aa)) constitute a GMPS ATP-PPase domain. 235-241 (SGGVDSS) is a binding site for ATP.

Homodimer.

The catalysed reaction is XMP + L-glutamine + ATP + H2O = GMP + L-glutamate + AMP + diphosphate + 2 H(+). It functions in the pathway purine metabolism; GMP biosynthesis; GMP from XMP (L-Gln route): step 1/1. Its function is as follows. Catalyzes the synthesis of GMP from XMP. The protein is GMP synthase [glutamine-hydrolyzing] of Pseudomonas aeruginosa (strain UCBPP-PA14).